Consider the following 96-residue polypeptide: Co-chaperonin GroES (96 aa).

Belongs to the GroES chaperonin family. Heptamer of 7 subunits arranged in a ring. Interacts with the chaperonin GroEL.

It localises to the cytoplasm. Together with the chaperonin GroEL, plays an essential role in assisting protein folding. The GroEL-GroES system forms a nano-cage that allows encapsulation of the non-native substrate proteins and provides a physical environment optimized to promote and accelerate protein folding. GroES binds to the apical surface of the GroEL ring, thereby capping the opening of the GroEL channel. The chain is Co-chaperonin GroES from Teredinibacter turnerae (strain ATCC 39867 / T7901).